A 122-amino-acid polypeptide reads, in one-letter code: Large ribosomal subunit protein uL14 (122 aa).

The protein belongs to the universal ribosomal protein uL14 family. In terms of assembly, part of the 50S ribosomal subunit. Forms a cluster with proteins L3 and L19. In the 70S ribosome, L14 and L19 interact and together make contacts with the 16S rRNA in bridges B5 and B8.

In terms of biological role, binds to 23S rRNA. Forms part of two intersubunit bridges in the 70S ribosome. The protein is Large ribosomal subunit protein uL14 of Staphylococcus haemolyticus (strain JCSC1435).